A 204-amino-acid polypeptide reads, in one-letter code: Large ribosomal subunit protein eL15B (204 aa).

The disordered stretch occupies residues 165-185; sequence TATGKKSRGINKGHKFNNTKA. A compositionally biased stretch (basic residues) spans 169–185; the sequence is KKSRGINKGHKFNNTKA.

Belongs to the eukaryotic ribosomal protein eL15 family. Component of the large ribosomal subunit (LSU). Mature yeast ribosomes consist of a small (40S) and a large (60S) subunit. The 40S small subunit contains 1 molecule of ribosomal RNA (18S rRNA) and 33 different proteins (encoded by 57 genes). The large 60S subunit contains 3 rRNA molecules (25S, 5.8S and 5S rRNA) and 46 different proteins (encoded by 81 genes).

Its subcellular location is the cytoplasm. Component of the ribosome, a large ribonucleoprotein complex responsible for the synthesis of proteins in the cell. The small ribosomal subunit (SSU) binds messenger RNAs (mRNAs) and translates the encoded message by selecting cognate aminoacyl-transfer RNA (tRNA) molecules. The large subunit (LSU) contains the ribosomal catalytic site termed the peptidyl transferase center (PTC), which catalyzes the formation of peptide bonds, thereby polymerizing the amino acids delivered by tRNAs into a polypeptide chain. The nascent polypeptides leave the ribosome through a tunnel in the LSU and interact with protein factors that function in enzymatic processing, targeting, and the membrane insertion of nascent chains at the exit of the ribosomal tunnel. This is Large ribosomal subunit protein eL15B from Saccharomyces cerevisiae (strain ATCC 204508 / S288c) (Baker's yeast).